The primary structure comprises 474 residues: Glutamate--tRNA ligase (474 aa).

Residues 9–19 (PSPTGYLHVGG) carry the 'HIGH' region motif. Positions 240–244 (KLSKR) match the 'KMSKS' region motif. Lys-243 contacts ATP.

The protein belongs to the class-I aminoacyl-tRNA synthetase family. Glutamate--tRNA ligase type 1 subfamily. As to quaternary structure, monomer.

The protein resides in the cytoplasm. It carries out the reaction tRNA(Glu) + L-glutamate + ATP = L-glutamyl-tRNA(Glu) + AMP + diphosphate. Catalyzes the attachment of glutamate to tRNA(Glu) in a two-step reaction: glutamate is first activated by ATP to form Glu-AMP and then transferred to the acceptor end of tRNA(Glu). This chain is Glutamate--tRNA ligase, found in Aliivibrio salmonicida (strain LFI1238) (Vibrio salmonicida (strain LFI1238)).